Reading from the N-terminus, the 115-residue chain is Large ribosomal subunit protein eL30 (115 aa).

A phosphoserine mark is found at Ser-10 and Ser-16. Lys-26 bears the N6-acetyllysine; alternate mark. Residue Lys-26 forms a Glycyl lysine isopeptide (Lys-Gly) (interchain with G-Cter in SUMO2); alternate linkage.

Belongs to the eukaryotic ribosomal protein eL30 family. Component of the large ribosomal subunit.

Its subcellular location is the cytoplasm. Component of the large ribosomal subunit. The ribosome is a large ribonucleoprotein complex responsible for the synthesis of proteins in the cell. The protein is Large ribosomal subunit protein eL30 (RPL30) of Homo sapiens (Human).